The following is a 150-amino-acid chain: 3-dehydroquinate dehydratase (150 aa).

Catalysis depends on Tyr-26, which acts as the Proton acceptor. Residues Asn-77, His-83, and Asp-90 each coordinate substrate. His-103 (proton donor) is an active-site residue. Substrate contacts are provided by residues 104–105 (LS) and Arg-114.

The protein belongs to the type-II 3-dehydroquinase family. Homododecamer.

The catalysed reaction is 3-dehydroquinate = 3-dehydroshikimate + H2O. It participates in metabolic intermediate biosynthesis; chorismate biosynthesis; chorismate from D-erythrose 4-phosphate and phosphoenolpyruvate: step 3/7. Functionally, catalyzes a trans-dehydration via an enolate intermediate. This Sodalis glossinidius (strain morsitans) protein is 3-dehydroquinate dehydratase.